Consider the following 695-residue polypeptide: Elongation factor G (695 aa).

The 275-residue stretch at 8-282 folds into the tr-type G domain; that stretch reads EKTRNIGIMA…AVLDYLPAPT (275 aa). GTP is bound by residues 17–24, 81–85, and 135–138; these read AHIDAGKT, DTPGH, and NKMD.

Belongs to the TRAFAC class translation factor GTPase superfamily. Classic translation factor GTPase family. EF-G/EF-2 subfamily.

Its subcellular location is the cytoplasm. Catalyzes the GTP-dependent ribosomal translocation step during translation elongation. During this step, the ribosome changes from the pre-translocational (PRE) to the post-translocational (POST) state as the newly formed A-site-bound peptidyl-tRNA and P-site-bound deacylated tRNA move to the P and E sites, respectively. Catalyzes the coordinated movement of the two tRNA molecules, the mRNA and conformational changes in the ribosome. This Listeria innocua serovar 6a (strain ATCC BAA-680 / CLIP 11262) protein is Elongation factor G.